The following is a 475-amino-acid chain: Endoglucanase A (475 aa).

The N-terminal stretch at 1–26 (MKKTTAFLLCFLMIFTALLPMQNANA) is a signal peptide. His-147 is a catalytic residue. The active-site Proton donor is Glu-195. The active-site Nucleophile is the Glu-332. The 66-residue stretch at 409–474 (PVIVYGDYNN…LLGMVSKLPS (66 aa)) folds into the Dockerin domain.

The protein belongs to the glycosyl hydrolase 5 (cellulase A) family.

The catalysed reaction is Endohydrolysis of (1-&gt;4)-beta-D-glucosidic linkages in cellulose, lichenin and cereal beta-D-glucans.. Functionally, the biological conversion of cellulose to glucose generally requires three types of hydrolytic enzymes: (1) Endoglucanases which cut internal beta-1,4-glucosidic bonds; (2) Exocellobiohydrolases that cut the disaccharide cellobiose from the non-reducing end of the cellulose polymer chain; (3) Beta-1,4-glucosidases which hydrolyze the cellobiose and other short cello-oligosaccharides to glucose. This is Endoglucanase A (celCCA) from Ruminiclostridium cellulolyticum (strain ATCC 35319 / DSM 5812 / JCM 6584 / H10) (Clostridium cellulolyticum).